A 312-amino-acid chain; its full sequence is Glycerol-3-phosphate dehydrogenase [NAD(P)+] (312 aa).

W11, R30, R31, and K95 together coordinate NADPH. K95, G123, and S125 together coordinate sn-glycerol 3-phosphate. Residue A127 participates in NADPH binding. 5 residues coordinate sn-glycerol 3-phosphate: K177, D230, S240, R241, and N242. Catalysis depends on K177, which acts as the Proton acceptor. R241 is an NADPH binding site. NADPH is bound by residues V265 and E267.

Belongs to the NAD-dependent glycerol-3-phosphate dehydrogenase family.

The protein resides in the cytoplasm. The catalysed reaction is sn-glycerol 3-phosphate + NAD(+) = dihydroxyacetone phosphate + NADH + H(+). It catalyses the reaction sn-glycerol 3-phosphate + NADP(+) = dihydroxyacetone phosphate + NADPH + H(+). Its pathway is membrane lipid metabolism; glycerophospholipid metabolism. Catalyzes the reduction of the glycolytic intermediate dihydroxyacetone phosphate (DHAP) to sn-glycerol 3-phosphate (G3P), the key precursor for phospholipid synthesis. The chain is Glycerol-3-phosphate dehydrogenase [NAD(P)+] from Helicobacter acinonychis (strain Sheeba).